The sequence spans 349 residues: MNTTVAVPRAIIWKGDSITILNQTKLPHVAEYKTLTSIEDVWKSIVMLEVRGAPAIGIAAAFGLALAAQKYEAINIVEFKTKFNRDCNYLGTSRPTAVNLFWAIDRMRAAIEEVSTIKIAREILEEEALQIQQEDEQVCRSLGEHALTCFQDGDRILTICNAGSIATARYGTALAPFYIGKEKGIHLHAYACETRPVLQGARLTTWELREAGVDVTLITDNMAAHTIRTKNISAIIVGADRIVANGDTANKVGTLNLAILAKHYQIPFYVAAPLSTFDTKKKTGNEIIIEERDETEVTKINGQQIAPAGIHIYNPAFDITPHEFISGIITEKGILQGDYTKEIASLFEK.

Residues 51-53 (RGA), Arg-94, and Gln-199 contribute to the substrate site. Asp-240 acts as the Proton donor in catalysis. Substrate is bound at residue 250–251 (NK).

It belongs to the eIF-2B alpha/beta/delta subunits family. MtnA subfamily. As to quaternary structure, homodimer.

It catalyses the reaction 5-(methylsulfanyl)-alpha-D-ribose 1-phosphate = 5-(methylsulfanyl)-D-ribulose 1-phosphate. The protein operates within amino-acid biosynthesis; L-methionine biosynthesis via salvage pathway; L-methionine from S-methyl-5-thio-alpha-D-ribose 1-phosphate: step 1/6. Catalyzes the interconversion of methylthioribose-1-phosphate (MTR-1-P) into methylthioribulose-1-phosphate (MTRu-1-P). The polypeptide is Methylthioribose-1-phosphate isomerase (Bacillus cytotoxicus (strain DSM 22905 / CIP 110041 / 391-98 / NVH 391-98)).